The following is a 661-amino-acid chain: UvrABC system protein B (661 aa).

The Helicase ATP-binding domain occupies 23 to 180 (EGLQKGYRIQ…THLARIGYER (158 aa)). 36-43 (GVTGSGKT) provides a ligand contact to ATP. A Beta-hairpin motif is present at residues 89–112 (YYDYYQPEAYIPTRDLYIEKNADI). The Helicase C-terminal domain occupies 426 to 592 (QIDDLVNEIA…TIIKPLDEEI (167 aa)). The 36-residue stretch at 620–655 (EEYIALLEEEMYKAASELRYEDAARLRDELFNIREK) folds into the UVR domain.

It belongs to the UvrB family. As to quaternary structure, forms a heterotetramer with UvrA during the search for lesions. Interacts with UvrC in an incision complex.

The protein localises to the cytoplasm. The UvrABC repair system catalyzes the recognition and processing of DNA lesions. A damage recognition complex composed of 2 UvrA and 2 UvrB subunits scans DNA for abnormalities. Upon binding of the UvrA(2)B(2) complex to a putative damaged site, the DNA wraps around one UvrB monomer. DNA wrap is dependent on ATP binding by UvrB and probably causes local melting of the DNA helix, facilitating insertion of UvrB beta-hairpin between the DNA strands. Then UvrB probes one DNA strand for the presence of a lesion. If a lesion is found the UvrA subunits dissociate and the UvrB-DNA preincision complex is formed. This complex is subsequently bound by UvrC and the second UvrB is released. If no lesion is found, the DNA wraps around the other UvrB subunit that will check the other stand for damage. This chain is UvrABC system protein B, found in Thermosipho africanus (strain TCF52B).